The chain runs to 131 residues: Global transcriptional regulator Spx (131 aa).

Residues C10 and C13 are joined by a disulfide bond.

The protein belongs to the ArsC family. Spx subfamily. As to quaternary structure, interacts with the C-terminal domain of the alpha subunit of the RNAP.

The protein localises to the cytoplasm. Its activity is regulated as follows. Under non-stress conditions, Spx is degraded by ClpXP. Efficient degradation by ClpXP requires the adapter protein SpxH/YjbH. Function, levels and solubility of Spx are affected by SpxH/YjbH aggregation and stress conditions. Global transcriptional regulator that plays a key role in stress response and exerts either positive or negative regulation of genes. Acts by interacting with the C-terminal domain of the alpha subunit of the RNA polymerase (RNAP). This interaction can enhance binding of RNAP to the promoter region of target genes and stimulate their transcription, or block interaction of RNAP with activator proteins and repress transcription. In terms of biological role, required for transcription of thioredoxin reductase (trxB). Modulates the expression of icaR, encoding a repressor of the biofilm operon icaADBC. Also controls the transcription of trfA, a gene implicated in cell wall antibiotic resistance, which in turn is required for degradation of MazE antitoxin, the unstable component of the MazEF toxin-antitoxin system, that neutralizes the endoribonuclease activity of MazF toxin. In Staphylococcus aureus (strain NCTC 8325 / PS 47), this protein is Global transcriptional regulator Spx.